The chain runs to 146 residues: Large ribosomal subunit protein uL15 (146 aa).

The interval 1–64 is disordered; it reads MELNSIKPAA…MPMHRRLPKR (64 aa). Residues 30–39 are compositionally biased toward basic residues; the sequence is TATKGHKGQK.

It belongs to the universal ribosomal protein uL15 family. In terms of assembly, part of the 50S ribosomal subunit.

Functionally, binds to the 23S rRNA. This is Large ribosomal subunit protein uL15 from Geotalea daltonii (strain DSM 22248 / JCM 15807 / FRC-32) (Geobacter daltonii).